Consider the following 223-residue polypeptide: uncharacterized protein (223 aa).

The 61-residue stretch at glutamate 11 to lysine 71 folds into the HTH tetR-type domain. Positions serine 34 to phenylalanine 53 form a DNA-binding region, H-T-H motif.

This is an uncharacterized protein from Bacillus subtilis (strain 168).